Consider the following 135-residue polypeptide: Large ribosomal subunit protein uL16c (135 aa).

This sequence belongs to the universal ribosomal protein uL16 family. Part of the 50S ribosomal subunit.

Its subcellular location is the plastid. It is found in the chloroplast. The polypeptide is Large ribosomal subunit protein uL16c (Lepidium virginicum (Virginia pepperweed)).